Reading from the N-terminus, the 41-residue chain is Large ribosomal subunit protein bL36 (41 aa).

The interval 1 to 21 (MKIRNSLKSLRGRHRDNQLVR) is disordered.

The protein belongs to the bacterial ribosomal protein bL36 family.

The polypeptide is Large ribosomal subunit protein bL36 (Methylobacterium sp. (strain 4-46)).